Here is a 530-residue protein sequence, read N- to C-terminus: Asc-type amino acid transporter 1 (530 aa).

The segment at 1 to 36 (MRRDSDMASHIQQPGGHGNPGPAPSPSPGPGPGPGA) is disordered. Residues 21–33 (GPAPSPSPGPGPG) show a composition bias toward pro residues. Transmembrane regions (helical) follow at residues 46 to 66 (IGLV…GIFI), 78 to 98 (VGLA…GSLC), 119 to 139 (IFGG…MYPT), 192 to 212 (IQVI…TVGF), 274 to 294 (AIFI…VAYF), 316 to 336 (LLGY…FGGI), 368 to 388 (CTPI…MLVG), 394 to 414 (INYV…GLLV), 430 to 450 (LLVP…SFIS), and 454 to 474 (VCGV…LGVF). A disordered region spans residues 508–530 (EEENGPMGQPSPLPITDKPLKTQ).

Belongs to the amino acid-polyamine-organocation (APC) superfamily. Disulfide-linked heterodimer with the amino acid transport protein SLC3A2/4F2hc.

Its subcellular location is the cell membrane. It carries out the reaction L-alanine(in) + glycine(out) = L-alanine(out) + glycine(in). The catalysed reaction is L-serine(out) + L-alanine(in) = L-serine(in) + L-alanine(out). It catalyses the reaction L-threonine(out) + L-alanine(in) = L-threonine(in) + L-alanine(out). The enzyme catalyses L-cysteine(out) + L-alanine(in) = L-cysteine(in) + L-alanine(out). It carries out the reaction 2-aminoisobutanoate(out) + L-alanine(in) = 2-aminoisobutanoate(in) + L-alanine(out). The catalysed reaction is D-serine(out) + L-alanine(in) = D-serine(in) + L-alanine(out). It catalyses the reaction D-alanine(out) + L-alanine(in) = D-alanine(in) + L-alanine(out). The enzyme catalyses L-valine(out) + L-alanine(in) = L-valine(in) + L-alanine(out). It carries out the reaction L-methionine(out) + L-alanine(in) = L-methionine(in) + L-alanine(out). The catalysed reaction is beta-alanine(out) + L-alanine(in) = beta-alanine(in) + L-alanine(out). It catalyses the reaction D-cysteine(out) + L-alanine(in) = D-cysteine(in) + L-alanine(out). The enzyme catalyses D-threonine(out) + L-alanine(in) = D-threonine(in) + L-alanine(out). It carries out the reaction D-isoleucine(out) + D-serine(in) = D-isoleucine(in) + D-serine(out). The catalysed reaction is D-serine(in) = D-serine(out). In terms of biological role, associates with SLC3A2/4F2hc to form a functional heterodimeric complex that translocates small neutral L- and D-amino acids across the plasma membrane. Preferentially mediates exchange transport, but can also operate via facilitated diffusion. Acts as a major transporter for glycine, L- and D-serine in the central nervous system. At the spinal cord and brainstem regulates glycine metabolism and glycinergic inhibitory neurotransmission by providing for glycine de novo synthesis from L-serine and glycine recycling from astrocytes to glycinergic motor neurons. At Schaffer collateral-CA1 synapses mediates D-serine and glycine release that modulates post-synaptic activation of NMDA receptors and excitatory glutamatergic transmission. May regulate D-serine release from mesenchymal progenitors located in developing subcutaneous adipose tissue, favoring white adipocyte over thermogenic beige adipocyte lineage commitment. The chain is Asc-type amino acid transporter 1 (Slc7a10) from Rattus norvegicus (Rat).